The following is a 401-amino-acid chain: Ribosomal RNA large subunit methyltransferase G (401 aa).

It belongs to the methyltransferase superfamily. RlmG family.

It is found in the cytoplasm. It carries out the reaction guanosine(1835) in 23S rRNA + S-adenosyl-L-methionine = N(2)-methylguanosine(1835) in 23S rRNA + S-adenosyl-L-homocysteine + H(+). Specifically methylates the guanine in position 1835 (m2G1835) of 23S rRNA. This chain is Ribosomal RNA large subunit methyltransferase G, found in Shewanella loihica (strain ATCC BAA-1088 / PV-4).